The chain runs to 150 residues: Large ribosomal subunit protein uL23m (150 aa).

This sequence belongs to the universal ribosomal protein uL23 family. As to quaternary structure, component of the mitochondrial ribosome large subunit (39S) which comprises a 16S rRNA and about 50 distinct proteins.

It localises to the mitochondrion. The chain is Large ribosomal subunit protein uL23m (mRpL23) from Drosophila melanogaster (Fruit fly).